The chain runs to 769 residues: 5-methyltetrahydropteroyltriglutamate--homocysteine methyltransferase (769 aa).

5-methyltetrahydropteroyltri-L-glutamate-binding positions include R16 to K19 and K118. L-homocysteine is bound by residues I440–S442 and E493. L-methionine contacts are provided by residues I440 to S442 and E493. Residues R524–C525 and W570 each bind 5-methyltetrahydropteroyltri-L-glutamate. D608 serves as a coordination point for L-homocysteine. D608 serves as a coordination point for L-methionine. E614 is a 5-methyltetrahydropteroyltri-L-glutamate binding site. H650, C652, and E674 together coordinate Zn(2+). H706 acts as the Proton donor in catalysis. Residue C738 participates in Zn(2+) binding.

Belongs to the vitamin-B12 independent methionine synthase family. Zn(2+) is required as a cofactor.

The enzyme catalyses 5-methyltetrahydropteroyltri-L-glutamate + L-homocysteine = tetrahydropteroyltri-L-glutamate + L-methionine. Its pathway is amino-acid biosynthesis; L-methionine biosynthesis via de novo pathway; L-methionine from L-homocysteine (MetE route): step 1/1. Functionally, catalyzes the transfer of a methyl group from 5-methyltetrahydrofolate to homocysteine resulting in methionine formation. This is 5-methyltetrahydropteroyltriglutamate--homocysteine methyltransferase from Acidiphilium cryptum (strain JF-5).